A 259-amino-acid chain; its full sequence is Malonyl-[acyl-carrier protein] O-methyltransferase 2 (259 aa).

The protein belongs to the methyltransferase superfamily.

It carries out the reaction malonyl-[ACP] + S-adenosyl-L-methionine = malonyl-[ACP] methyl ester + S-adenosyl-L-homocysteine. Its pathway is cofactor biosynthesis; biotin biosynthesis. Converts the free carboxyl group of a malonyl-thioester to its methyl ester by transfer of a methyl group from S-adenosyl-L-methionine (SAM). It allows to synthesize pimeloyl-ACP via the fatty acid synthetic pathway. The protein is Malonyl-[acyl-carrier protein] O-methyltransferase 2 of Ilyobacter polytropus (strain ATCC 51220 / DSM 2926 / LMG 16218 / CuHBu1).